We begin with the raw amino-acid sequence, 186 residues long: Ribosome-recycling factor (186 aa).

The protein belongs to the RRF family.

It localises to the cytoplasm. Functionally, responsible for the release of ribosomes from messenger RNA at the termination of protein biosynthesis. May increase the efficiency of translation by recycling ribosomes from one round of translation to another. The chain is Ribosome-recycling factor from Nitratiruptor sp. (strain SB155-2).